Reading from the N-terminus, the 738-residue chain is MTSSGPGPRFLLLLPLLLPPAASASDRPRGRDPVNPEKLLVITVATAETEGYLRFLRSAEFFNYTVRTLGLGEEWRGGDVARTVGGGQKVRWLKKEMEKYADREDMIIMFVDSYDVILAGSPTELLKKFVQSGSRLLFSAESFCWPEWGLAEQYPEVGTGKRFLNSGGFIGFATTIHQIVRQWKYKDDDDDQLFYTRLYLDPGLREKLSLNLDHKSRIFQNLNGALDEVVLKFDRNRVRIRNVAYDTLPVVVHGNGPTKLQLNYLGNYVPKGWTPEGGCGFCNQDRRTLPGGQPPPRVFLAVFVEQPTPFLPRFLQRLLLLDYPPDRVTLFLHNNEVFHEPHIADSWPQLQDHFSAVKLVGPEEALSPGEARDMAMDLCRQDPECEFYFSLDADTVLTNLQTLRILIEENRKVIAPMLSRHGKLWSNFWGALSPDEYYARSEDYVELVQRKRVGVWNVPYISQAYVIRGDTLRTELPQRDVFSGSDTDPDMAFCKSFRDKGIFLHLSNQHEFGRLLATSRYDTEHLHPDLWQIFDNPVDWKEQYIHENYSRALEGEGIVEQPCPDVYWFPLLSEQMCDELVAEMEHYGQWSGGRHEDSRLAGGYENVPTVDIHMKQVGYEDQWLQLLRTYVGPMTESLFPGYHTKARAVMNFVVRYRPDEQPSLRPHHDSSTFTLNVALNHKGLDYEGGGCRFLRYDCVISSPRKGWALLHPGRLTHYHEGLPTTWGTRYIMVSFVDP.

Positions 1-24 (MTSSGPGPRFLLLLPLLLPPAASA) are cleaved as a signal peptide. Positions 25-290 (SDRPRGRDPV…FCNQDRRTLP (266 aa)) are required for glycosyltransferase activity. Residue 44–46 (VAT) participates in UDP binding. Asparagine 63 carries N-linked (GlcNAc...) asparagine glycosylation. Mn(2+) is bound by residues aspartate 112, aspartate 115, and histidine 253. 112 to 114 (DSY) contributes to the UDP binding site. UDP is bound at residue 256-259 (GPTK). 2 disulfides stabilise this stretch: cysteine 279-cysteine 282 and cysteine 379-cysteine 385. Residues 295–520 (PPRVFLAVFV…EFGRLLATSR (226 aa)) are accessory region. Asparagine 548 carries N-linked (GlcNAc...) asparagine glycosylation. Cysteine 563 and cysteine 698 are joined by a disulfide. 2-oxoglutarate-binding residues include arginine 599 and tyrosine 656. Positions 647 to 738 (RAVMNFVVRY…RYIMVSFVDP (92 aa)) constitute a Fe2OG dioxygenase domain. 2 residues coordinate Fe cation: histidine 667 and aspartate 669. The interval 672–715 (TFTLNVALNHKGLDYEGGGCRFLRYDCVISSPRKGWALLHPGRL) is important for dimerization. Asparagine 676 contacts 2-oxoglutarate. Histidine 719 lines the Fe cation pocket. Arginine 729 contributes to the 2-oxoglutarate binding site.

In terms of assembly, homodimer. Fe(2+) serves as cofactor. Requires L-ascorbate as cofactor. Mn(2+) is required as a cofactor.

It localises to the rough endoplasmic reticulum. Its subcellular location is the endoplasmic reticulum lumen. The protein localises to the endoplasmic reticulum membrane. The protein resides in the secreted. It is found in the extracellular space. The enzyme catalyses L-lysyl-[collagen] + 2-oxoglutarate + O2 = (5R)-5-hydroxy-L-lysyl-[collagen] + succinate + CO2. The catalysed reaction is (5R)-5-hydroxy-L-lysyl-[collagen] + UDP-alpha-D-galactose = (5R)-5-O-(beta-D-galactosyl)-5-hydroxy-L-lysyl-[collagen] + UDP + H(+). It carries out the reaction (5R)-5-O-(beta-D-galactosyl)-5-hydroxy-L-lysyl-[collagen] + UDP-alpha-D-glucose = (5R)-5-O-[alpha-D-glucosyl-(1-&gt;2)-beta-D-galactosyl]-5-hydroxy-L-lysyl-[collagen] + UDP + H(+). Multifunctional enzyme that catalyzes a series of post-translational modifications on Lys residues in procollagen. Plays a redundant role in catalyzing the formation of hydroxylysine residues in -Xaa-Lys-Gly- sequences in collagens. Plays a redundant role in catalyzing the transfer of galactose onto hydroxylysine groups, giving rise to galactosyl 5-hydroxylysine. Has an essential role by catalyzing the subsequent transfer of glucose moieties, giving rise to 1,2-glucosylgalactosyl-5-hydroxylysine residues. Catalyzes hydroxylation and glycosylation of Lys residues in the MBL1 collagen-like domain, giving rise to hydroxylysine and 1,2-glucosylgalactosyl-5-hydroxylysine residues. Catalyzes hydroxylation and glycosylation of Lys residues in the ADIPOQ collagen-like domain, giving rise to hydroxylysine and 1,2-glucosylgalactosyl-5-hydroxylysine residues. Essential for normal biosynthesis and secretion of type IV collagens. Essential for normal formation of basement membranes. The protein is Multifunctional procollagen lysine hydroxylase and glycosyltransferase LH3 (PLOD3) of Pongo abelii (Sumatran orangutan).